A 367-amino-acid polypeptide reads, in one-letter code: MSYGIVTEQIATFDTELRLESGRILGPIDIAYETYGTLNESRSNAILVTHAWTGSAHLAGRYSEDEKRAGWWDEIVGPGALLDTDRYFVICSNVIGSCFGSTGPTSINPKTGKRYNLAFPVITVRDMVKAQALLMDRLGIGKLFCVLGGSMGGMQALEWATQFPERVGSAVVLATTPRPSAQAISLNAVARWAIFNDPNWKKGEYRKNPKDGLALARGIGHITFLSDESMTAKFDRRFSARDGQFDFFGQFEVERYLTYNGYNFVDRFDANSFLYLAKALDLYDVASGCESLEEAFAPVTAPIQFFAFTSDWLYPPAQTEEMVASLKTLGKQVEYHLITSAYGHDAFLLEHQTFTPLVESFLDRVKV.

An AB hydrolase-1 domain is found at 44–350 (NAILVTHAWT…AYGHDAFLLE (307 aa)). Residue serine 150 is the Nucleophile of the active site. A substrate-binding site is contributed by arginine 217. Active-site residues include aspartate 311 and histidine 344. Aspartate 345 is a substrate binding site.

Belongs to the AB hydrolase superfamily. MetX family. As to quaternary structure, homodimer.

It is found in the cytoplasm. The enzyme catalyses L-homoserine + acetyl-CoA = O-acetyl-L-homoserine + CoA. The protein operates within amino-acid biosynthesis; L-methionine biosynthesis via de novo pathway; O-acetyl-L-homoserine from L-homoserine: step 1/1. Functionally, transfers an acetyl group from acetyl-CoA to L-homoserine, forming acetyl-L-homoserine. The protein is Homoserine O-acetyltransferase of Citrifermentans bemidjiense (strain ATCC BAA-1014 / DSM 16622 / JCM 12645 / Bem) (Geobacter bemidjiensis).